We begin with the raw amino-acid sequence, 360 residues long: Membrane-bound lytic murein transglycosylase C (360 aa).

The N-terminal stretch at 1-16 (MKKIFALALIAPLLIS) is a signal peptide. Residue cysteine 17 is the site of N-palmitoyl cysteine attachment. Cysteine 17 carries S-diacylglycerol cysteine lipidation.

This sequence belongs to the transglycosylase Slt family.

It localises to the cell outer membrane. It carries out the reaction Exolytic cleavage of the (1-&gt;4)-beta-glycosidic linkage between N-acetylmuramic acid (MurNAc) and N-acetylglucosamine (GlcNAc) residues in peptidoglycan, from either the reducing or the non-reducing ends of the peptidoglycan chains, with concomitant formation of a 1,6-anhydrobond in the MurNAc residue.. In terms of biological role, murein-degrading enzyme. May play a role in recycling of muropeptides during cell elongation and/or cell division. The polypeptide is Membrane-bound lytic murein transglycosylase C (Cronobacter sakazakii (strain ATCC BAA-894) (Enterobacter sakazakii)).